The chain runs to 315 residues: Ribosomal RNA small subunit methyltransferase H (315 aa).

S-adenosyl-L-methionine contacts are provided by residues 37-39 (GGH), Asp57, Phe83, Asp105, and Gln112.

This sequence belongs to the methyltransferase superfamily. RsmH family.

It localises to the cytoplasm. It catalyses the reaction cytidine(1402) in 16S rRNA + S-adenosyl-L-methionine = N(4)-methylcytidine(1402) in 16S rRNA + S-adenosyl-L-homocysteine + H(+). Its function is as follows. Specifically methylates the N4 position of cytidine in position 1402 (C1402) of 16S rRNA. The protein is Ribosomal RNA small subunit methyltransferase H of Pseudomonas fluorescens (strain ATCC BAA-477 / NRRL B-23932 / Pf-5).